The chain runs to 358 residues: Phospho-N-acetylmuramoyl-pentapeptide-transferase (358 aa).

The next 10 helical transmembrane spans lie at 19–39 (YLTLRAILSTLTALLIAVLIG), 71–91 (TMGGLLILAAIVVSVLLWADL), 95–115 (YVWVTLSVVVGYGIIGFIDDY), 126–146 (LIARWKYFWQSVIAIGVALYL), 166–186 (VMPQMGMFFVVMTYFVIVGTS), 194–214 (GLDGLAIVPTVLVAGAFAIFA), 237–257 (LVIVCTAIVGAGLGFLWFNTY), 261–281 (VFMGDVGSLALGGTLGIIAVL), 286–306 (IVLVIMGGVFVVETLSVILQV), and 336–356 (VIVRFWIISIILVLVGLATLK).

The protein belongs to the glycosyltransferase 4 family. MraY subfamily. The cofactor is Mg(2+).

Its subcellular location is the cell inner membrane. It catalyses the reaction UDP-N-acetyl-alpha-D-muramoyl-L-alanyl-gamma-D-glutamyl-meso-2,6-diaminopimeloyl-D-alanyl-D-alanine + di-trans,octa-cis-undecaprenyl phosphate = di-trans,octa-cis-undecaprenyl diphospho-N-acetyl-alpha-D-muramoyl-L-alanyl-D-glutamyl-meso-2,6-diaminopimeloyl-D-alanyl-D-alanine + UMP. It participates in cell wall biogenesis; peptidoglycan biosynthesis. Its function is as follows. Catalyzes the initial step of the lipid cycle reactions in the biosynthesis of the cell wall peptidoglycan: transfers peptidoglycan precursor phospho-MurNAc-pentapeptide from UDP-MurNAc-pentapeptide onto the lipid carrier undecaprenyl phosphate, yielding undecaprenyl-pyrophosphoryl-MurNAc-pentapeptide, known as lipid I. In Pseudoalteromonas atlantica (strain T6c / ATCC BAA-1087), this protein is Phospho-N-acetylmuramoyl-pentapeptide-transferase.